The chain runs to 450 residues: CBL-interacting protein kinase 23 (450 aa).

The region spanning 13-268 (YELGRTLGEG…IAELINNEWF (256 aa)) is the Protein kinase domain. ATP is bound by residues 19-27 (LGEGTFAKV) and K42. D136 acts as the Proton acceptor in catalysis. An activation loop region spans residues 154–183 (DFGLSALSQQVREDGLLHTTCGTPNYVAPE). The NAF domain occupies 306 to 331 (EERPSVMNAFELISTSQGLNLGTLFE). Residues 339–368 (KRETRFASRLPANEILSKIEAAAGPMGFNV) form a PPI region.

It belongs to the protein kinase superfamily. CAMK Ser/Thr protein kinase family. SNF1 subfamily. It depends on Mn(2+) as a cofactor.

The enzyme catalyses L-seryl-[protein] + ATP = O-phospho-L-seryl-[protein] + ADP + H(+). It carries out the reaction L-threonyl-[protein] + ATP = O-phospho-L-threonyl-[protein] + ADP + H(+). Functionally, CIPK serine-threonine protein kinases interact with CBL proteins. Binding of a CBL protein to the regulatory NAF domain of CIPK protein lead to the activation of the kinase in a calcium-dependent manner. This Oryza sativa subsp. japonica (Rice) protein is CBL-interacting protein kinase 23 (CIPK23).